The following is a 379-amino-acid chain: Chaperone protein DnaJ (379 aa).

In terms of domain architecture, J spans 5–69 (EFYDRLGVSK…QKRAAYDQYG (65 aa)). The segment at 135-217 (GAEKEVSYNR…CHGTGHEKKT (83 aa)) adopts a CR-type zinc-finger fold. Zn(2+) contacts are provided by cysteine 148, cysteine 151, cysteine 165, cysteine 168, cysteine 191, cysteine 194, cysteine 205, and cysteine 208. CXXCXGXG motif repeat units follow at residues 148–155 (CHTCSGSG), 165–172 (CQKCHGSG), 191–198 (CDVCQGSG), and 205–212 (CPTCHGTG).

Belongs to the DnaJ family. Homodimer. Requires Zn(2+) as cofactor.

It localises to the cytoplasm. Its function is as follows. Participates actively in the response to hyperosmotic and heat shock by preventing the aggregation of stress-denatured proteins and by disaggregating proteins, also in an autonomous, DnaK-independent fashion. Unfolded proteins bind initially to DnaJ; upon interaction with the DnaJ-bound protein, DnaK hydrolyzes its bound ATP, resulting in the formation of a stable complex. GrpE releases ADP from DnaK; ATP binding to DnaK triggers the release of the substrate protein, thus completing the reaction cycle. Several rounds of ATP-dependent interactions between DnaJ, DnaK and GrpE are required for fully efficient folding. Also involved, together with DnaK and GrpE, in the DNA replication of plasmids through activation of initiation proteins. This is Chaperone protein DnaJ from Streptococcus agalactiae serotype V (strain ATCC BAA-611 / 2603 V/R).